Reading from the N-terminus, the 220-residue chain is Endonuclease NucS (220 aa).

The protein belongs to the NucS endonuclease family.

It is found in the cytoplasm. Functionally, cleaves both 3' and 5' ssDNA extremities of branched DNA structures. The polypeptide is Endonuclease NucS (Mycobacterium leprae (strain TN)).